A 215-amino-acid chain; its full sequence is Large ribosomal subunit protein uL3 (215 aa).

A compositionally biased stretch (low complexity) spans 131-144 (SSSRASHGNSRSHN). Residues 131–150 (SSSRASHGNSRSHNVPGSIG) are disordered. Position 153 is an N5-methylglutamine (Q153).

It belongs to the universal ribosomal protein uL3 family. As to quaternary structure, part of the 50S ribosomal subunit. Forms a cluster with proteins L14 and L19. In terms of processing, methylated by PrmB.

Its function is as follows. One of the primary rRNA binding proteins, it binds directly near the 3'-end of the 23S rRNA, where it nucleates assembly of the 50S subunit. The polypeptide is Large ribosomal subunit protein uL3 (Nitrosomonas europaea (strain ATCC 19718 / CIP 103999 / KCTC 2705 / NBRC 14298)).